The sequence spans 278 residues: HTH-type transcriptional activator RhaS (278 aa).

One can recognise an HTH araC/xylS-type domain in the interval 174 to 272 (NQLMAWLEDH…NWSPRDIRQG (99 aa)). 2 consecutive DNA-binding regions (H-T-H motif) follow at residues 191 to 212 (EAVAEQFSLSLRTLHRQLKQHT) and 239 to 262 (VTEIAYRCGFGDSNHFSTLFRREF).

Binds DNA as a dimer.

The protein resides in the cytoplasm. Activates expression of the rhaBAD and rhaT operons. In Salmonella arizonae (strain ATCC BAA-731 / CDC346-86 / RSK2980), this protein is HTH-type transcriptional activator RhaS.